The sequence spans 114 residues: RETNENDYVDIHKGDKCYSRVGKSFNGGPQPLSLGKGCTDFGTILHELGHSVGFNHEHSRSDRDEYLIVHKENVLSGYERDFEKLWENKTRTIGDFDYDSIMLYGLLCLFKGSV.

Residues 1–114 (RETNENDYVD…GLLCLFKGSV (114 aa)) form the Peptidase M12A domain. An intrachain disulfide couples C17 to C38. H46 contributes to the Zn(2+) binding site. The active site involves E47. Residues H50 and H56 each coordinate Zn(2+). A glycan (N-linked (GlcNAc...) asparagine) is linked at N88.

In terms of assembly, monomer. Requires Zn(2+) as cofactor. Expressed by the venom gland.

It localises to the secreted. Its activity is regulated as follows. Inhibited by 1,10-phenanthroline. Its function is as follows. Zinc metalloprotease. Provoques deadhesion of endothelial cells from cell cultures, and also degradation of fibronectin, fibrinogen and gelatin in vitro. Its role in the venom is not fully understood but it might act as a spreading factor that facilitates diffusion of other venom toxins. Alternatively, it might be involved in the proteolytic processing of other venom toxins or it might play a role in extra-oral digestion of prey. The sequence is that of Astacin-like metalloprotease toxin 4 from Loxosceles laeta (South American recluse spider).